Reading from the N-terminus, the 599-residue chain is Afamin (599 aa).

An N-terminal signal peptide occupies residues methionine 1–threonine 21. Albumin domains lie at leucine 22–threonine 210, glutamine 211–glutamate 403, and threonine 404–asparagine 599. The N-linked (GlcNAc...) (complex) asparagine glycan is linked to asparagine 33. Disulfide bonds link cysteine 77–cysteine 86, cysteine 99–cysteine 114, cysteine 113–cysteine 124, cysteine 148–cysteine 193, cysteine 192–cysteine 201, cysteine 224–cysteine 270, cysteine 269–cysteine 277, cysteine 289–cysteine 303, cysteine 302–cysteine 313, cysteine 340–cysteine 385, and cysteine 384–cysteine 393. An N-linked (GlcNAc...) (complex) asparagine glycan is attached at asparagine 109. Positions alanine 215–lysine 319 are binding pocket for hydrophobic ligands. Residue asparagine 383 is glycosylated (N-linked (GlcNAc...) (complex) asparagine; atypical). A glycan (N-linked (GlcNAc...) (complex) asparagine) is linked at asparagine 402. Disulfide bonds link cysteine 416/cysteine 462, cysteine 461/cysteine 470, cysteine 483/cysteine 499, cysteine 498/cysteine 509, cysteine 536/cysteine 581, and cysteine 580/cysteine 589. Residue asparagine 488 is glycosylated (N-linked (GlcNAc...) asparagine).

The protein belongs to the ALB/AFP/VDB family. As to quaternary structure, forms a 1:1 complex with Wnt family members; interacts with WNT1, WNT2B, WNT3, WNT3A, WNT5A, WNT7A, WNT7B, WNT8, WNT9A, WNT9B, WNT10A and WNT10B. Post-translationally, N-glycosylated; more than 90% of the glycans are sialylated. In terms of tissue distribution, high level detected in plasma but also in extravascular fluids such as follicular and cerebrospinal fluids (at protein level).

The protein resides in the secreted. Its function is as follows. Functions as a carrier for hydrophobic molecules in body fluids. Essential for the solubility and activity of lipidated Wnt family members, including WNT1, WNT2B, WNT3, WNT3A, WNT5A, WNT7A, WNT7B, WNT8, WNT9A, WNT9B, WNT10A and WNT10B. Binds vitamin E. May transport vitamin E in body fluids under conditions where the lipoprotein system is not sufficient. May be involved in the transport of vitamin E across the blood-brain barrier. The polypeptide is Afamin (AFM) (Homo sapiens (Human)).